We begin with the raw amino-acid sequence, 134 residues long: Small ribosomal subunit protein uS8 (134 aa).

Belongs to the universal ribosomal protein uS8 family. As to quaternary structure, part of the 30S ribosomal subunit. Contacts proteins S5 and S12.

In terms of biological role, one of the primary rRNA binding proteins, it binds directly to 16S rRNA central domain where it helps coordinate assembly of the platform of the 30S subunit. This Thermosipho africanus (strain TCF52B) protein is Small ribosomal subunit protein uS8.